Reading from the N-terminus, the 242-residue chain is Octanoyltransferase (242 aa).

The BPL/LPL catalytic domain maps to 31-206 (SQTTDEIWFL…LFLKNFGYNQ (176 aa)). Substrate contacts are provided by residues 70-77 (RGGQVTYH), 137-139 (SIG), and 150-152 (GLA). Cys-168 functions as the Acyl-thioester intermediate in the catalytic mechanism.

This sequence belongs to the LipB family.

It localises to the cytoplasm. The enzyme catalyses octanoyl-[ACP] + L-lysyl-[protein] = N(6)-octanoyl-L-lysyl-[protein] + holo-[ACP] + H(+). It participates in protein modification; protein lipoylation via endogenous pathway; protein N(6)-(lipoyl)lysine from octanoyl-[acyl-carrier-protein]: step 1/2. Its function is as follows. Catalyzes the transfer of endogenously produced octanoic acid from octanoyl-acyl-carrier-protein onto the lipoyl domains of lipoate-dependent enzymes. Lipoyl-ACP can also act as a substrate although octanoyl-ACP is likely to be the physiological substrate. This is Octanoyltransferase from Coxiella burnetii (strain RSA 493 / Nine Mile phase I).